The chain runs to 66 residues: Large ribosomal subunit protein bL31 (66 aa).

The Zn(2+) site is built by cysteine 16, cysteine 18, cysteine 36, and cysteine 39.

Belongs to the bacterial ribosomal protein bL31 family. Type A subfamily. In terms of assembly, part of the 50S ribosomal subunit. The cofactor is Zn(2+).

Binds the 23S rRNA. The protein is Large ribosomal subunit protein bL31 of Clostridioides difficile (strain 630) (Peptoclostridium difficile).